Here is a 151-residue protein sequence, read N- to C-terminus: Pyruvoyl-dependent arginine decarboxylase (151 aa).

Residue serine 42 is modified to Pyruvic acid (Ser).

This sequence belongs to the PdaD family. It depends on pyruvate as a cofactor.

It catalyses the reaction L-arginine + H(+) = agmatine + CO2. This is Pyruvoyl-dependent arginine decarboxylase from Methanothermobacter thermautotrophicus (strain ATCC 29096 / DSM 1053 / JCM 10044 / NBRC 100330 / Delta H) (Methanobacterium thermoautotrophicum).